Here is a 450-residue protein sequence, read N- to C-terminus: Phosphoglucosamine mutase (450 aa).

Ser-101 serves as the catalytic Phosphoserine intermediate. Residues Ser-101, Asp-240, Asp-242, and Asp-244 each coordinate Mg(2+). At Ser-101 the chain carries Phosphoserine.

This sequence belongs to the phosphohexose mutase family. It depends on Mg(2+) as a cofactor. Post-translationally, activated by phosphorylation.

The enzyme catalyses alpha-D-glucosamine 1-phosphate = D-glucosamine 6-phosphate. Functionally, catalyzes the conversion of glucosamine-6-phosphate to glucosamine-1-phosphate. The polypeptide is Phosphoglucosamine mutase (Streptococcus gordonii (strain Challis / ATCC 35105 / BCRC 15272 / CH1 / DL1 / V288)).